A 146-amino-acid chain; its full sequence is Hemoglobin subunit beta (146 aa).

In terms of domain architecture, Globin spans 2-146 (HWSAEEKQLI…VAHALARKYH (145 aa)). Residues histidine 63 and histidine 92 each contribute to the heme b site.

Belongs to the globin family. Heterotetramer of two alpha chains and two beta chains. As to expression, red blood cells.

Its function is as follows. Involved in oxygen transport from the lung to the various peripheral tissues. The protein is Hemoglobin subunit beta (HBB) of Eudyptes chrysocome (Western rockhopper penguin).